The primary structure comprises 442 residues: GTPase Der (442 aa).

EngA-type G domains are found at residues 2-168 and 182-356; these read ATVL…EEAG and LKVA…EKID. GTP contacts are provided by residues 8–15, 55–59, 118–121, 188–195, 235–239, and 301–304; these read GRPNVGKS, DTCGL, NKVE, GKPNAGKS, DTAGM, and NKSD. The KH-like domain occupies 357–442; that stretch reads LRIPTGLLNN…PIFIKLRRKK (86 aa).

It belongs to the TRAFAC class TrmE-Era-EngA-EngB-Septin-like GTPase superfamily. EngA (Der) GTPase family. Associates with the 50S ribosomal subunit.

In terms of biological role, GTPase that plays an essential role in the late steps of ribosome biogenesis. The sequence is that of GTPase Der from Kosmotoga olearia (strain ATCC BAA-1733 / DSM 21960 / TBF 19.5.1).